The following is a 103-amino-acid chain: Glutaredoxin-C11 (103 aa).

The region spanning 1 to 102 (MERIRDLSSK…QMLKDAKAIW (102 aa)) is the Glutaredoxin domain. A disulfide bridge connects residues C21 and C24.

Belongs to the glutaredoxin family. CC-type subfamily.

Its subcellular location is the cytoplasm. Functionally, has a glutathione-disulfide oxidoreductase activity in the presence of NADPH and glutathione reductase. Reduces low molecular weight disulfides and proteins. The protein is Glutaredoxin-C11 (GRXC11) of Arabidopsis thaliana (Mouse-ear cress).